We begin with the raw amino-acid sequence, 301 residues long: Mycothiol acetyltransferase (301 aa).

2 consecutive N-acetyltransferase domains span residues 6–151 (EWRQ…ILRD) and 153–301 (VSLR…QYGR). Residue 79 to 81 (LFV) participates in acetyl-CoA binding. Positions 180, 219, and 235 each coordinate 1D-myo-inositol 2-(L-cysteinylamino)-2-deoxy-alpha-D-glucopyranoside. Acetyl-CoA is bound by residues 239-241 (VGV) and 246-252 (QGGGLGR). 1D-myo-inositol 2-(L-cysteinylamino)-2-deoxy-alpha-D-glucopyranoside is bound at residue Tyr-273.

This sequence belongs to the acetyltransferase family. MshD subfamily. Monomer.

The catalysed reaction is 1D-myo-inositol 2-(L-cysteinylamino)-2-deoxy-alpha-D-glucopyranoside + acetyl-CoA = mycothiol + CoA + H(+). Functionally, catalyzes the transfer of acetyl from acetyl-CoA to desacetylmycothiol (Cys-GlcN-Ins) to form mycothiol. This Amycolatopsis mediterranei (strain U-32) protein is Mycothiol acetyltransferase.